Consider the following 310-residue polypeptide: Ribosomal RNA small subunit methyltransferase H (310 aa).

Residues 33 to 35 (GGH), D52, F79, D98, and Q105 contribute to the S-adenosyl-L-methionine site.

The protein belongs to the methyltransferase superfamily. RsmH family.

The protein localises to the cytoplasm. It catalyses the reaction cytidine(1402) in 16S rRNA + S-adenosyl-L-methionine = N(4)-methylcytidine(1402) in 16S rRNA + S-adenosyl-L-homocysteine + H(+). In terms of biological role, specifically methylates the N4 position of cytidine in position 1402 (C1402) of 16S rRNA. The protein is Ribosomal RNA small subunit methyltransferase H of Campylobacter jejuni subsp. jejuni serotype O:6 (strain 81116 / NCTC 11828).